The sequence spans 101 residues: Small ribosomal subunit protein uS14 (101 aa).

Belongs to the universal ribosomal protein uS14 family. Part of the 30S ribosomal subunit. Contacts proteins S3 and S10.

Binds 16S rRNA, required for the assembly of 30S particles and may also be responsible for determining the conformation of the 16S rRNA at the A site. This Sphingopyxis alaskensis (strain DSM 13593 / LMG 18877 / RB2256) (Sphingomonas alaskensis) protein is Small ribosomal subunit protein uS14.